The sequence spans 319 residues: D-alanine--D-alanine ligase B (319 aa).

An ATP-grasp domain is found at 117–312 (KQVWQSLGPA…FQQLVLAILA (196 aa)). Residue 143 to 198 (ATELGFPLIVKPAHEGSSIGMAKVNSVDELIAAWKAASTYDSQVLVEQWIQGPEFT) participates in ATP binding. Mg(2+)-binding residues include aspartate 266, glutamate 279, and asparagine 281.

It belongs to the D-alanine--D-alanine ligase family. It depends on Mg(2+) as a cofactor. Mn(2+) is required as a cofactor.

The protein resides in the cytoplasm. It catalyses the reaction 2 D-alanine + ATP = D-alanyl-D-alanine + ADP + phosphate + H(+). Its pathway is cell wall biogenesis; peptidoglycan biosynthesis. Its function is as follows. Cell wall formation. This is D-alanine--D-alanine ligase B from Pseudomonas syringae pv. tomato (strain ATCC BAA-871 / DC3000).